The primary structure comprises 1088 residues: Pathogenesis-related homeodomain protein (1088 aa).

Repeat copies occupy residues 140–152 (INMGQKETMPEEV), 173–199 (NSYQSGLPPENAVTDCKQVQLGHRSDD), 205–239 (GLVELVIGQKNVAKSPSQLVETGKRGRGRPRKVQT), 240–274 (GLEQLVIGQKTAAKSSSQLGDTGKRSRGRPRKVQN), 283–295 (INMEQKETIPEQV), 316–342 (NSDQSELPPENAAKNCNHAQFGHQSDD), 348–382 (GFKELVIGQETVAKSPSQLVDAGKRGRGRPRKVQT), and 383–417 (GLEQLVPVQETAAKSSSQLGDTGKRSRGRPRKVQD). The tract at residues 140–295 (INMGQKETMP…EQKETIPEQV (156 aa)) is 2 X 13 AA repeats. Residues 173 to 342 (NSYQSGLPPE…HAQFGHQSDD (170 aa)) form a 2 X 27 AA approximate repeats region. The segment at 205–274 (GLVELVIGQK…SRGRPRKVQN (70 aa)) is 2 X 35 AA approximate tandem repeats (type C). Residues 220–282 (PSQLVETGKR…QNSPTSFLEN (63 aa)) are disordered. 2 consecutive DNA-binding regions (a.T hook) follow at residues 226–236 (TGKRGRGRPRK) and 261–271 (TGKRSRGRPRK). The span at 272–282 (VQNSPTSFLEN) shows a compositional bias: polar residues. The span at 303-320 (SLTIPTDNQSRTYNSDQS) shows a compositional bias: polar residues. 2 disordered regions span residues 303 to 343 (SLTI…SDDT) and 363 to 484 (PSQL…RMEE). A 2 X 35 AA approximate tandem repeats (type C) region spans residues 348–417 (GFKELVIGQE…SRGRPRKVQD (70 aa)). 2 DNA-binding regions (a.T hook) span residues 369-379 (AGKRGRGRPRK) and 404-414 (TGKRSRGRPRK). Residues 578 to 635 (DIFCAKCGSKDVTLSNDIILCDGACDRGFHQFCLDPPLLKEYIPPDDEGWLCPGCECK) form a PHD-type zinc finger. 2 disordered regions span residues 667-810 (AASG…PLYP) and 851-901 (EEYG…ARES). One copy of the 4-1 repeat lies at 678 to 693 (GLPSDDSEDDDYDPGG). A 2 X 16 AA Asp/Glu-rich (acidic) repeats region spans residues 678–744 (GLPSDDSEDD…SEDDEYDPSG (67 aa)). Residues 705–718 (SSTDESDYQSESDD) are compositionally biased toward acidic residues. The 4-2 repeat unit spans residues 729 to 744 (GLPSDDSEDDEYDPSG). 2 stretches are compositionally biased toward basic and acidic residues: residues 788 to 802 (DHVRNNEEGCGHPEQ) and 874 to 901 (NNSDKEATAMERGRESGDLELDQKARES). A DNA-binding region (homeobox) is located at residues 935–994 (KSTSKTLHGEHATQRLLQSFKENQYPQRAVKESLAAELALSVRQVSNWFNNRRWSFRHSS).

It belongs to the PHD-associated homeobox family.

Its subcellular location is the nucleus. Specifically binds to the fungal elicitor-responsive DNA element, 5'-CTAATTGTTTA-3', of the gene PR2 promoter. This chain is Pathogenesis-related homeodomain protein (PRH), found in Petroselinum crispum (Parsley).